Reading from the N-terminus, the 200-residue chain is Recombination protein RecR (200 aa).

Residues 57–72 (CSECRTFTEEDTCAIC) form a C4-type zinc finger. The Toprim domain occupies 81-176 (GELCIVESPA…SASRIAHGVP (96 aa)).

It belongs to the RecR family.

Its function is as follows. May play a role in DNA repair. It seems to be involved in an RecBC-independent recombinational process of DNA repair. It may act with RecF and RecO. This Aliivibrio salmonicida (strain LFI1238) (Vibrio salmonicida (strain LFI1238)) protein is Recombination protein RecR.